The following is a 203-amino-acid chain: FMN-dependent NADH:quinone oxidoreductase 5 (203 aa).

Residues Ser-9, 15 to 17, 95 to 98, and 139 to 142 each bind FMN; these read SAS, MYNF, and TSGG.

This sequence belongs to the azoreductase type 1 family. In terms of assembly, homodimer. It depends on FMN as a cofactor.

The enzyme catalyses 2 a quinone + NADH + H(+) = 2 a 1,4-benzosemiquinone + NAD(+). It catalyses the reaction N,N-dimethyl-1,4-phenylenediamine + anthranilate + 2 NAD(+) = 2-(4-dimethylaminophenyl)diazenylbenzoate + 2 NADH + 2 H(+). In terms of biological role, quinone reductase that provides resistance to thiol-specific stress caused by electrophilic quinones. Its function is as follows. Also exhibits azoreductase activity. Catalyzes the reductive cleavage of the azo bond in aromatic azo compounds to the corresponding amines. The protein is FMN-dependent NADH:quinone oxidoreductase 5 of Pseudomonas fluorescens (strain ATCC BAA-477 / NRRL B-23932 / Pf-5).